The chain runs to 335 residues: Cell division protein ZipA (335 aa).

Residues 1–6 (MENLQL) are Periplasmic-facing. The helical transmembrane segment at 7–27 (VLFVLGAVAIIAVLVHGFWSI) threads the bilayer. The Cytoplasmic portion of the chain corresponds to 28-335 (RRQQPKSLKE…SYLQRIRAQM (308 aa)). 2 disordered regions span residues 37–128 (ESPM…NEEV) and 163–185 (RPAPRVEAPQSVAPASVEPVSVE). The segment covering 170 to 185 (APQSVAPASVEPVSVE) has biased composition (low complexity).

This sequence belongs to the ZipA family. As to quaternary structure, interacts with FtsZ via their C-terminal domains.

It is found in the cell inner membrane. Its function is as follows. Essential cell division protein that stabilizes the FtsZ protofilaments by cross-linking them and that serves as a cytoplasmic membrane anchor for the Z ring. Also required for the recruitment to the septal ring of downstream cell division proteins. The protein is Cell division protein ZipA of Shewanella loihica (strain ATCC BAA-1088 / PV-4).